Consider the following 119-residue polypeptide: Large ribosomal subunit protein uL24 (119 aa).

It belongs to the universal ribosomal protein uL24 family. In terms of assembly, part of the 50S ribosomal subunit.

Its function is as follows. One of two assembly initiator proteins, it binds directly to the 5'-end of the 23S rRNA, where it nucleates assembly of the 50S subunit. Located at the polypeptide exit tunnel on the outside of the subunit. This is Large ribosomal subunit protein uL24 from Haloquadratum walsbyi (strain DSM 16790 / HBSQ001).